The primary structure comprises 128 residues: Ribosome-binding factor A (128 aa).

Belongs to the RbfA family. In terms of assembly, monomer. Binds 30S ribosomal subunits, but not 50S ribosomal subunits or 70S ribosomes.

Its subcellular location is the cytoplasm. Its function is as follows. One of several proteins that assist in the late maturation steps of the functional core of the 30S ribosomal subunit. Associates with free 30S ribosomal subunits (but not with 30S subunits that are part of 70S ribosomes or polysomes). Required for efficient processing of 16S rRNA. May interact with the 5'-terminal helix region of 16S rRNA. The polypeptide is Ribosome-binding factor A (Herminiimonas arsenicoxydans).